The sequence spans 562 residues: NAD-dependent malic enzyme (562 aa).

Y101 acts as the Proton donor in catalysis. R154 contacts NAD(+). Residue K172 is the Proton acceptor of the active site. The a divalent metal cation site is built by E243, D244, and D267. Residues D267 and N415 each coordinate NAD(+).

The protein belongs to the malic enzymes family. Homotetramer. Requires Mg(2+) as cofactor. It depends on Mn(2+) as a cofactor.

The enzyme catalyses (S)-malate + NAD(+) = pyruvate + CO2 + NADH. The catalysed reaction is oxaloacetate + H(+) = pyruvate + CO2. This is NAD-dependent malic enzyme from Shewanella baltica (strain OS223).